Consider the following 1117-residue polypeptide: Telomerase reverse transcriptase (1117 aa).

A TEN region spans residues 1–191 (MQKINNINNN…VKQKKWYKNN (191 aa)). Residues 217-519 (NQYIYPEIQR…ENLEKVEEKL (303 aa)) are RBD. In terms of domain architecture, Reverse transcriptase spans 517 to 881 (EKLIPEDSFQ…NECQWIGKSI (365 aa)). Positions 520–887 (IPEDSFQKYP…GKSIDMNTLE (368 aa)) are RT. Asp-618 contributes to the Mg(2+) binding site. The tract at residues 638–742 (SDLIQDTYFI…NQDKPRCITK (105 aa)) is TRAP. The Mg(2+) site is built by Asp-815 and Asp-816. The segment at 888–1117 (IKSIQKQTQQ…SAKSNQQNTN (230 aa)) is CTE.

This sequence belongs to the reverse transcriptase family. Telomerase subfamily. In terms of assembly, component of the telomerase holoenzyme complex, composed of the catalytic core (the catalytic subunit TERT, the telomerase RNA template component TER and TAP65/p65), which is associated with two heterotrimeric subcomplexes: (i) the replication protein A (RPA)-related subcomplex, composed of TEB1, RPA2/TEB2 and RPA3/TEB3 and (ii) the CST-like subcomplex, composed of TAP75/p75, TAP45/p45 and TAP19/p19. TEB1 and the CST-like subcomplex are tethered to the catalytic core by TAP50/p50.

It is found in the nucleus. Its subcellular location is the chromosome. The protein resides in the telomere. The catalysed reaction is DNA(n) + a 2'-deoxyribonucleoside 5'-triphosphate = DNA(n+1) + diphosphate. In terms of biological role, catalytic component of telomerase, an essential ribonucleoprotein enzyme that copies new telomeric repeats onto chromosome ends by repetitively synthesizing the short telomere-repeat sequence 5'-TTGGGG-3' using an RNA template component TER. TERT is a reverse transcriptase that adds simple sequence repeats to chromosome ends by copying a template sequence within the RNA component of the enzyme. This chain is Telomerase reverse transcriptase, found in Tetrahymena thermophila (strain SB210).